The following is a 349-amino-acid chain: MDVVLEVVDTFIADYAYAYFYPKRLAPYDFPSPSNTTDTSAKAFSTWIYKPATQFITLEPPEQAYMSSWDRDNPLRQALTLYLITWIFGLLVYFIVATLSYIFIFDKRTFEHPRFIKNQVRMEIIAANKAMPVMAIITAPFFLLEVQGYGKLYDTTEDGPGLWYDFFQFPLFLLFTDFCIYWAHRWLHHRLVYKYLHKLHHKWIMPTPFASHAFHPLDGFTQSLPYHIFPFIFPLQKMAYVALFVFVNLWSVMIHDGEYLTNNPVVNGAACHSLHHSRFEVNYGQFFTAFDRMGGTYRMPEQWMFERDMKMSEGRWKKEIEKVDELIEEIEGSDNRTYTDSAPIMKKTQ.

The next 3 membrane-spanning stretches (helical) occupy residues 84 to 104, 124 to 144, and 162 to 182; these read ITWI…YIFI, IIAA…FFLL, and LWYD…CIYW. The region spanning 170 to 296 is the Fatty acid hydroxylase domain; the sequence is PLFLLFTDFC…FTAFDRMGGT (127 aa). Positions 184-188 match the Histidine box-1 motif; sequence HRWLH. The Histidine box-2 signature appears at 197–201; sequence HKLHH. The helical transmembrane segment at 227–247 threads the bilayer; it reads HIFPFIFPLQKMAYVALFVFV. Residues 272-276 carry the Histidine box-3 motif; that stretch reads HSLHH.

It belongs to the sterol desaturase family.

The protein resides in the endoplasmic reticulum membrane. The catalysed reaction is episterol + 2 Fe(II)-[cytochrome b5] + O2 + 2 H(+) = 5-dehydroepisterol + 2 Fe(III)-[cytochrome b5] + 2 H2O. The protein operates within steroid metabolism; ergosterol biosynthesis. In terms of biological role, C-5 sterol desaturase; part of the third module of ergosterol biosynthesis pathway that includes the late steps of the pathway. ERG3A and ERG3BB catalyze the introduction of a C-5 double bond in the B ring to produce 5-dehydroepisterol. The third module or late pathway involves the ergosterol synthesis itself through consecutive reactions that mainly occur in the endoplasmic reticulum (ER) membrane. Firstly, the squalene synthase ERG9 catalyzes the condensation of 2 farnesyl pyrophosphate moieties to form squalene, which is the precursor of all steroids. Squalene synthase is crucial for balancing the incorporation of farnesyl diphosphate (FPP) into sterol and nonsterol isoprene synthesis. Secondly, squalene is converted into lanosterol by the consecutive action of the squalene epoxidase ERG1 and the lanosterol synthase ERG7. Then, the delta(24)-sterol C-methyltransferase ERG6 methylates lanosterol at C-24 to produce eburicol. Eburicol is the substrate of the sterol 14-alpha demethylase encoded by CYP51A, CYP51B and CYP51C, to yield 4,4,24-trimethyl ergosta-8,14,24(28)-trienol. CYP51B encodes the enzyme primarily responsible for sterol 14-alpha-demethylation, and plays an essential role in ascospore formation. CYP51A encodes an additional sterol 14-alpha-demethylase, induced on ergosterol depletion and responsible for the intrinsic variation in azole sensitivity. The third CYP51 isoform, CYP51C, does not encode a sterol 14-alpha-demethylase, but is required for full virulence on host wheat ears. The C-14 reductase ERG24 then reduces the C14=C15 double bond which leads to 4,4-dimethylfecosterol. A sequence of further demethylations at C-4, involving the C-4 demethylation complex containing the C-4 methylsterol oxidases ERG25, the sterol-4-alpha-carboxylate 3-dehydrogenase ERG26 and the 3-keto-steroid reductase ERG27, leads to the production of fecosterol via 4-methylfecosterol. ERG28 has a role as a scaffold to help anchor ERG25, ERG26 and ERG27 to the endoplasmic reticulum. The C-8 sterol isomerase ERG2 then catalyzes the reaction which results in unsaturation at C-7 in the B ring of sterols and thus converts fecosterol to episterol. The sterol-C5-desaturases ERG3A and ERG3BB then catalyze the introduction of a C-5 double bond in the B ring to produce 5-dehydroepisterol. The C-22 sterol desaturases ERG5A and ERG5B further convert 5-dehydroepisterol into ergosta-5,7,22,24(28)-tetraen-3beta-ol by forming the C-22(23) double bond in the sterol side chain. Finally, ergosta-5,7,22,24(28)-tetraen-3beta-ol is substrate of the C-24(28) sterol reductase ERG4 to produce ergosterol. The protein is Delta(7)-sterol 5(6)-desaturase ERG3A of Gibberella zeae (strain ATCC MYA-4620 / CBS 123657 / FGSC 9075 / NRRL 31084 / PH-1) (Wheat head blight fungus).